The following is a 248-amino-acid chain: Mannose-binding protein C (248 aa).

A signal peptide spans 1 to 20; that stretch reads MSLFPSLTLLLLSVVATSYS. The Collagen-like domain maps to 42 to 99; it reads GINGFPGKDGRDGTKGEKGEPGQGLRGLQGPPGKLGPPGNPGSSGSPGPKGQKGDPGE. The disordered stretch occupies residues 43-113; that stretch reads INGFPGKDGR…DSSLAASERK (71 aa). Proline 47 is subject to 4-hydroxyproline. Over residues 49 to 61 the composition is skewed to basic and acidic residues; the sequence is KDGRDGTKGEKGE. 4-hydroxyproline occurs at positions 73, 79, 82, and 88. The segment covering 82-91 has biased composition (low complexity); it reads PGSSGSPGPK. Residues 112 to 130 adopt a coiled-coil conformation; the sequence is RKALQTEMARIKKWLTFSL. The C-type lectin domain occupies 134 to 245; the sequence is VGNKFFLTNG…CSSSHLALCE (112 aa). Disulfide bonds link cysteine 155/cysteine 244 and cysteine 222/cysteine 236.

Oligomeric complex of 3 or more homotrimers. Interacts with MASP1 and MASP2. Interacts with MEP1A and MEP1B and may inhibit their catalytic activity. Hydroxylation on proline residues within the sequence motif, GXPG, is most likely to be 4-hydroxy as this fits the requirement for 4-hydroxylation in vertebrates.

Its subcellular location is the secreted. Functionally, calcium-dependent lectin involved in innate immune defense. Binds mannose, fucose and N-acetylglucosamine on different microorganisms and activates the lectin complement pathway. Binds to late apoptotic cells, as well as to apoptotic blebs and to necrotic cells, but not to early apoptotic cells, facilitating their uptake by macrophages. This is Mannose-binding protein C (MBL2) from Chlorocebus aethiops (Green monkey).